Consider the following 447-residue polypeptide: UPF0210 protein LAF_0976 (447 aa).

It belongs to the UPF0210 family. As to quaternary structure, homodimer.

The polypeptide is UPF0210 protein LAF_0976 (Limosilactobacillus fermentum (strain NBRC 3956 / LMG 18251) (Lactobacillus fermentum)).